A 95-amino-acid polypeptide reads, in one-letter code: uncharacterized protein (95 aa).

The segment at 65-95 (DANDYDTTTTEEEDSSTTTTTDNETNSDDDI) is disordered.

This is an uncharacterized protein from Lymantria dispar multicapsid nuclear polyhedrosis virus (LdMNPV).